The sequence spans 358 residues: Triacylglycerol lipase (358 aa).

Residues 1-39 form the signal peptide; sequence MVRSMRSRVAARAVAWALAVMPLAGAAGLTMAASPAAVA. The AB hydrolase-1 domain occupies 48–327; that stretch reads YPVILVHGLA…TSYHWNHLDE (280 aa). Position 56 (Leu56) interacts with substrate. Ser126 (nucleophile) is an active-site residue. Substrate is bound at residue Gln127. An intrachain disulfide couples Cys229 to Cys308. Asp280 contributes to the Ca(2+) binding site. Active-site charge relay system residues include Asp302 and His324. Ca(2+) is bound by residues Asp326, Gln330, and Val334.

Belongs to the AB hydrolase superfamily. Pseudomonas lipase family. In terms of assembly, monomer. Interacts with lipase-specific foldase Lif. Ca(2+) is required as a cofactor.

It localises to the secreted. The enzyme catalyses a triacylglycerol + H2O = a diacylglycerol + a fatty acid + H(+). In terms of biological role, catalyzes the hydrolysis of triacylglycerol. The chain is Triacylglycerol lipase from Burkholderia plantarii.